Here is an 87-residue protein sequence, read N- to C-terminus: U3-theraphotoxin-Hhn1a 16 (87 aa).

The N-terminal stretch at 1 to 24 (MVNMKASMFLTFAGLVLLFVVCYA) is a signal peptide. Positions 25–52 (SESEEKEFPKEMLSSIFAVDNDFKQGER) are excised as a propeptide. Intrachain disulfides connect C54-C67, C61-C72, and C66-C79.

Belongs to the neurotoxin 10 (Hwtx-1) family. 51 (Hntx-8) subfamily. Hntx-8 sub-subfamily. Expressed by the venom gland.

It is found in the secreted. Functionally, ion channel inhibitor. The polypeptide is U3-theraphotoxin-Hhn1a 16 (Cyriopagopus hainanus (Chinese bird spider)).